The sequence spans 294 residues: Ferredoxin--NADP reductase (294 aa).

The region spanning 13-137 is the FAD-binding FR-type domain; the sequence is KNPYIGKCLS…TGPVGKEMLL (125 aa). Residues 72–75, 93–95, tyrosine 99, 111–113, and threonine 152 each bind FAD; these read RLYS, CVR, and VCS. NADP(+)-binding residues include serine 75 and arginine 95. NADP(+)-binding positions include threonine 152, 184-185, 214-215, lysine 224, 224-228, 253-254, and glutamate 292; these read IP, SR, KMYIQ, and GL.

Belongs to the ferredoxin--NADP reductase type 1 family. It depends on FAD as a cofactor.

Its subcellular location is the cellular thylakoid membrane. The enzyme catalyses 2 reduced [2Fe-2S]-[ferredoxin] + NADP(+) + H(+) = 2 oxidized [2Fe-2S]-[ferredoxin] + NADPH. This Spirulina sp protein is Ferredoxin--NADP reductase (petH).